Here is an 832-residue protein sequence, read N- to C-terminus: Tuftelin-interacting protein 11 (832 aa).

2 disordered regions span residues 1–21 (MSMS…GVEI) and 33–145 (NEFN…GNWE). Composition is skewed to basic and acidic residues over residues 36–49 (NPDR…KEEA) and 88–99 (TAAEEKAEREGS). The segment covering 121–130 (TGGSFKTSQR) has biased composition (polar residues). One can recognise a G-patch domain in the interval 148-194 (TRGIGQKLLQKMGYVPGKGLGKNAQGIVNPIEAKLRKGKGAVGAYGS). Ser209 is modified (phosphoserine).

This sequence belongs to the TFP11/STIP family. As to quaternary structure, identified in the spliceosome C complex.

It localises to the nucleus. Functionally, involved in pre-mRNA splicing, specifically in spliceosome disassembly during late-stage splicing events. The chain is Tuftelin-interacting protein 11 (tfip11) from Danio rerio (Zebrafish).